The chain runs to 313 residues: Pyrimidine-specific ribonucleoside hydrolase RihB (313 aa).

The Proton acceptor role is filled by Asp11. Ca(2+) contacts are provided by Asp11, Asp16, and Val124. Gln227 and His239 together coordinate substrate. Residue Asp240 coordinates Ca(2+).

Belongs to the IUNH family. RihB subfamily. As to quaternary structure, homotetramer. The cofactor is Ca(2+).

The enzyme catalyses a pyrimidine ribonucleoside + H2O = a pyrimidine nucleobase + D-ribose. In terms of biological role, hydrolyzes cytidine or uridine to ribose and cytosine or uracil, respectively. Has a clear preference for cytidine over uridine. Strictly specific for ribonucleosides. The chain is Pyrimidine-specific ribonucleoside hydrolase RihB from Escherichia coli O9:H4 (strain HS).